We begin with the raw amino-acid sequence, 278 residues long: MNATLRILAWLIAVALVALPVVAVLNGWVGAERWPLARLRVSGDFKRVPAEELRAVVLPYARSGFFAVKLQDAQDAIARLPWVESAQVRKRWPDVLEVHVVEHKPFARWGTDRMLSEQGRLFRTPPLLKDFKLPQLGGPDAKTQEVVALYNESRALFAPTGLDVERLEMDARGSWSLGLSNGVQIVIGRDDARARLQRFARVLPQLTDPQRPIARADLRYTNGFTVERRMENGESGMDKKPKPVPPAAPHALVLNSLRLRTPLLTIPHSPFAIPGFKT.

At 1 to 6 (MNATLR) the chain is on the cytoplasmic side. A helical membrane pass occupies residues 7 to 27 (ILAWLIAVALVALPVVAVLNG). At 28–278 (WVGAERWPLA…SPFAIPGFKT (251 aa)) the chain is on the periplasmic side. The POTRA domain occupies 34–103 (WPLARLRVSG…DVLEVHVVEH (70 aa)).

Belongs to the FtsQ/DivIB family. FtsQ subfamily. As to quaternary structure, part of a complex composed of FtsB, FtsL and FtsQ.

It localises to the cell inner membrane. Essential cell division protein. May link together the upstream cell division proteins, which are predominantly cytoplasmic, with the downstream cell division proteins, which are predominantly periplasmic. May control correct divisome assembly. The sequence is that of Cell division protein FtsQ from Xanthomonas campestris pv. campestris (strain ATCC 33913 / DSM 3586 / NCPPB 528 / LMG 568 / P 25).